Reading from the N-terminus, the 25-residue chain is Pregnancy-associated glycoprotein 72 (25 aa).

2 N-linked (GlcNAc...) asparagine glycosylation sites follow: asparagine 4 and asparagine 21.

It belongs to the peptidase A1 family. In terms of processing, N-glycosylated. In terms of tissue distribution, expressed in chorionic epithelium (trophectoderm).

It localises to the secreted. The protein localises to the extracellular space. The protein is Pregnancy-associated glycoprotein 72 of Bison bison (American bison).